Reading from the N-terminus, the 416-residue chain is MTYHPKSDFLRVMQERGYLADCTDMQALDEAMSKGVVPAYIGYDATAASLHVGHLLNIMMLRWLQKTGHKPITLMGGGTTKVGDPSFRSEERPLLTPEKIDANIAGMKQVFARYLDYSDGATGALMLNNAEWLDSLNYLDFLRDIGRHFSVNRMLSFESVKSRLDREQSLSFLEFNYMILQAYDFLELFRRYGCRLQMGGSDQWGNIVNGIDLTRRVLEGEIFGLTSPLLTTSDGRKMGKSAGGAVWLSGEMLAPYDFWQFWRNTTDADVGRFLKLYTELPVEECDRLGALQGAEINGAKIRLANEVTTLLHGREAAEAAEATARAVFEQGGVGGALEVVEIAPATLGEGLSVTHFLVAAGLVTSGKEAKRLVAENGLRFNNEPVSDANAPVTAAMIGDELKVSIGRKKHKLVRLA.

Residue Y40 participates in L-tyrosine binding. The 'HIGH' region motif lies at 45-54 (ATAASLHVGH). L-tyrosine-binding residues include Y177 and Q181. The short motif at 237 to 241 (KMGKS) is the 'KMSKS' region element. Residue K240 participates in ATP binding. The S4 RNA-binding domain occupies 351–416 (LSVTHFLVAA…RKKHKLVRLA (66 aa)).

It belongs to the class-I aminoacyl-tRNA synthetase family. TyrS type 1 subfamily. Homodimer.

Its subcellular location is the cytoplasm. The catalysed reaction is tRNA(Tyr) + L-tyrosine + ATP = L-tyrosyl-tRNA(Tyr) + AMP + diphosphate + H(+). Catalyzes the attachment of tyrosine to tRNA(Tyr) in a two-step reaction: tyrosine is first activated by ATP to form Tyr-AMP and then transferred to the acceptor end of tRNA(Tyr). This Cereibacter sphaeroides (strain ATCC 17025 / ATH 2.4.3) (Rhodobacter sphaeroides) protein is Tyrosine--tRNA ligase.